The primary structure comprises 484 residues: Toluene efflux pump outer membrane protein TtgC (484 aa).

The N-terminal stretch at 1 to 17 (MTKSLLSLAVTAFILGG) is a signal peptide. Cysteine 18 carries N-palmitoyl cysteine lipidation. Residue cysteine 18 is the site of S-diacylglycerol cysteine attachment.

This sequence belongs to the outer membrane factor (OMF) (TC 1.B.17) family.

It localises to the cell outer membrane. Functionally, the outer membrane component of a constitutive organic solvent efflux system. Is involved in export of toluene, styrene, m-xylene, propylbenzene and ethylbenzene. Also exports AMP and the antibiotics carbenicillin, nalidixic acid, chloramphenicol and tetracycline. This Pseudomonas putida (strain DOT-T1E) protein is Toluene efflux pump outer membrane protein TtgC (ttgC).